Here is a 178-residue protein sequence, read N- to C-terminus: MDSQEPIILEKSIKIEEVIKIANTSIIDIVTKTVTPEIKAPYELVDVEYDKMGSDYILSILVDKEGGITVEDTSDLTNIISPLLDTIDPDPFPNQYMLEVSSPGLERPLKTADSLKAAVGSYINVSLYQAIDKVKVFQGDLLAFDGETLTIDYLDKTRHKIVNIPYQAVAKVRMAVKL.

This sequence belongs to the RimP family.

It localises to the cytoplasm. Functionally, required for maturation of 30S ribosomal subunits. In Streptococcus pyogenes serotype M18 (strain MGAS8232), this protein is Ribosome maturation factor RimP.